We begin with the raw amino-acid sequence, 333 residues long: Protein farnesyltransferase/geranylgeranyltransferase type-1 subunit alpha (333 aa).

PFTA repeat units lie at residues 61–95, 96–130, 132–166, 167–200, and 207–241; these read LSSR…SLKV, DLHV…KLGP, ARNS…NLGG, WEDE…RSPV, and MRES…DEST.

Belongs to the protein prenyltransferase subunit alpha family. In terms of assembly, heterodimer of FTA and FTB (farnesyltransferase). Heterodimer of an alpha and a beta subunit. Mg(2+) serves as cofactor.

It carries out the reaction L-cysteinyl-[protein] + (2E,6E)-farnesyl diphosphate = S-(2E,6E)-farnesyl-L-cysteinyl-[protein] + diphosphate. The catalysed reaction is geranylgeranyl diphosphate + L-cysteinyl-[protein] = S-geranylgeranyl-L-cysteinyl-[protein] + diphosphate. In terms of biological role, essential subunit of both the farnesyltransferase and the geranylgeranyltransferase complex. Contributes to the transfer of a farnesyl or geranylgeranyl moiety from farnesyl or geranylgeranyl diphosphate to a cysteine at the fourth position from the C-terminus of several proteins having the C-terminal sequence Cys-aliphatic-aliphatic-X. The sequence is that of Protein farnesyltransferase/geranylgeranyltransferase type-1 subunit alpha (FTA) from Pisum sativum (Garden pea).